We begin with the raw amino-acid sequence, 1135 residues long: Receptor-type guanylate cyclase gcy-4 (1135 aa).

The signal sequence occupies residues 1–20; that stretch reads MTQLLRFLLILSIFCDFSHS. Over 21–483 the chain is Extracellular; it reads QRPTIRVGIA…CPIPFFDQYR (463 aa). Residues Asn-37, Asn-193, Asn-209, Asn-251, Asn-349, Asn-375, Asn-431, Asn-436, and Asn-447 are each glycosylated (N-linked (GlcNAc...) asparagine). A helical transmembrane segment spans residues 484–504; that stretch reads LLIFVFVIVAGLLILAIFTCL. At 505-1135 the chain is on the cytoplasmic side; that stretch reads TSMVRNQRAE…VMRREMMRVS (631 aa). Residues 535–560 are disordered; the sequence is KGRRLSTDSENSTVTKSSKGSSSKNF. The region spanning 545-837 is the Protein kinase domain; the sequence is NSTVTKSSKG…KDNLMDHVFS (293 aa). Residues 546–560 are compositionally biased toward low complexity; the sequence is STVTKSSKGSSSKNF. The Guanylate cyclase domain maps to 895–1025; that stretch reads TVFFSDLVKF…DTVNTASRME (131 aa).

Belongs to the adenylyl cyclase class-4/guanylyl cyclase family. In terms of tissue distribution, expressed bilaterally in ASE neurons.

It localises to the cell membrane. The catalysed reaction is GTP = 3',5'-cyclic GMP + diphosphate. Guanylate cyclase involved in the production of the second messenger cGMP. Regulates chemotaxis responses toward salt ions in ASE sensory neurons. The chain is Receptor-type guanylate cyclase gcy-4 from Caenorhabditis briggsae.